The following is a 595-amino-acid chain: Actin-histidine N-methyltransferase (595 aa).

Positions 1–22 (MGKKSRVKTQKSGTGATATVSP) are disordered. Residues 10 to 20 (QKSGTGATATV) are compositionally biased toward polar residues. S-adenosyl-L-methionine-binding positions include Arg75, 104 to 106 (EGF), Arg254, 275 to 279 (DMCNH), and 325 to 327 (SGF). The 221-residue stretch at 94–314 (EGFEMVNFKE…AGEQIYIFYG (221 aa)) folds into the SET domain. Position 513 is a phosphoserine (Ser513). Residues 549 to 572 (ENGLVNGENSVPNGTRSENENLNQ) are compositionally biased toward polar residues. The tract at residues 549–595 (ENGLVNGENSVPNGTRSENENLNQEESKRAVEDAKGSSSDNTAEVKE) is disordered. Residues 573–583 (EESKRAVEDAK) show a composition bias toward basic and acidic residues. Positions 584-595 (GSSSDNTAEVKE) are enriched in polar residues.

It belongs to the class V-like SAM-binding methyltransferase superfamily. SETD3 actin-histidine methyltransferase family. Interacts with MYOD1. Phosphorylated by GSK3B, which is required for recognition by the SCF(FBXW7) complex and subsequent degradation. Post-translationally, ubiquitinated by the SCF(FBXW7) complex following phosphorylation by GSK3B, leading to its degradation by the proteasome.

It is found in the cytoplasm. Its subcellular location is the nucleus. It catalyses the reaction L-histidyl-[protein] + S-adenosyl-L-methionine = N(tele)-methyl-L-histidyl-[protein] + S-adenosyl-L-homocysteine + H(+). In terms of biological role, protein-histidine N-methyltransferase that specifically mediates 3-methylhistidine (tele-methylhistidine) methylation of actin at 'His-73'. Histidine methylation of actin is required for smooth muscle contraction of the laboring uterus during delivery. Does not have protein-lysine N-methyltransferase activity and probably only catalyzes histidine methylation of actin. The chain is Actin-histidine N-methyltransferase from Papio anubis (Olive baboon).